The following is a 174-amino-acid chain: Large ribosomal subunit protein uL10 (174 aa).

This sequence belongs to the universal ribosomal protein uL10 family. As to quaternary structure, part of the ribosomal stalk of the 50S ribosomal subunit. The N-terminus interacts with L11 and the large rRNA to form the base of the stalk. The C-terminus forms an elongated spine to which L12 dimers bind in a sequential fashion forming a multimeric L10(L12)X complex.

Functionally, forms part of the ribosomal stalk, playing a central role in the interaction of the ribosome with GTP-bound translation factors. The chain is Large ribosomal subunit protein uL10 from Anaeromyxobacter dehalogenans (strain 2CP-C).